The sequence spans 59 residues: Light-harvesting protein B-800-850 alpha chain A (59 aa).

Residues 1–11 (MNQARIWTVVK) lie on the Cytoplasmic side of the membrane. The helical transmembrane segment at 12 to 35 (PTVGLPLLLGSVTVIAILVHFAVL) threads the bilayer. Position 31 (H31) interacts with a bacteriochlorophyll. The Periplasmic portion of the chain corresponds to 36–59 (SHTTWFSKYWNGKAAAIESSVNVG).

Belongs to the antenna complex alpha subunit family. In terms of assembly, the core complex is formed by different alpha and beta chains, binding bacteriochlorophyll molecules, and arranged most probably in tetrameric structures disposed around the reaction center. The non-pigmented gamma chains may constitute additional components.

The protein localises to the cell inner membrane. Antenna complexes are light-harvesting systems, which transfer the excitation energy to the reaction centers. The polypeptide is Light-harvesting protein B-800-850 alpha chain A (pucAA) (Rhodopseudomonas palustris (strain ATCC BAA-98 / CGA009)).